A 604-amino-acid polypeptide reads, in one-letter code: Netrin-1 (604 aa).

Positions 1-24 (MMRAVWEALAALAAVACLVGAVRG) are cleaved as a signal peptide. One can recognise a Laminin N-terminal domain in the interval 47-284 (HPRRCIPDFV…AVSDLQVGGR (238 aa)). Residues Asn95, Asn116, and Asn131 are each glycosylated (N-linked (GlcNAc...) asparagine). Cystine bridges form between Cys119-Cys152, Cys285-Cys294, Cys287-Cys304, Cys306-Cys315, Cys318-Cys338, Cys341-Cys350, Cys343-Cys368, Cys371-Cys380, Cys383-Cys401, Cys404-Cys416, Cys406-Cys423, Cys425-Cys434, Cys437-Cys451, Cys472-Xaa544, and Cys491-Cys601. Laminin EGF-like domains lie at 285-340 (CKCN…ECVA), 341-403 (CNCN…ACKA), and 404-453 (CDCH…PCIK). Residue Asn417 is glycosylated (N-linked (GlcNAc...) asparagine). The NTR domain maps to 472–601 (CDSYCKASKG…FQQREKKGKC (130 aa)). Residues 530–532 (RGD) carry the Cell attachment site motif.

In terms of assembly, binds to its receptors; DCC, UNC5A, UNC5B, UNC5C and probably UNC5D. Binds to its receptor; DSCAM. Interacts with APP.

The protein resides in the secreted. Its subcellular location is the cytoplasm. In terms of biological role, netrins control guidance of CNS commissural axons and peripheral motor axons. Its association with either DCC or some UNC5 receptors will lead to axon attraction or repulsion, respectively. Binding to UNC5C might cause dissociation of UNC5C from polymerized TUBB3 in microtubules and thereby lead to increased microtubule dynamics and axon repulsion. Involved in dorsal root ganglion axon projection towards the spinal cord. It also serves as a survival factor via its association with its receptors which prevent the initiation of apoptosis. Involved in colorectal tumorigenesis by regulating apoptosis. The polypeptide is Netrin-1 (Ntn1) (Rattus norvegicus (Rat)).